A 272-amino-acid chain; its full sequence is HMP-PP phosphatase (272 aa).

Residue aspartate 8 is the Nucleophile of the active site. The Mg(2+) site is built by aspartate 8, aspartate 10, and aspartate 212.

The protein belongs to the HAD-like hydrolase superfamily. Cof family. The cofactor is Mg(2+).

It carries out the reaction 4-amino-2-methyl-5-(diphosphooxymethyl)pyrimidine + H2O = 4-amino-2-methyl-5-(phosphooxymethyl)pyrimidine + phosphate + H(+). In terms of biological role, catalyzes the hydrolysis of 4-amino-2-methyl-5-hydroxymethylpyrimidine pyrophosphate (HMP-PP) to 4-amino-2-methyl-5-hydroxymethylpyrimidine phosphate (HMP-P). The sequence is that of HMP-PP phosphatase from Escherichia coli O8 (strain IAI1).